The chain runs to 445 residues: FAD-dependent monooxygenase sorC (445 aa).

Residues 8–28 (PFEVAIVGGGITGLALAVGLL) form a helical membrane-spanning segment. The N-linked (GlcNAc...) asparagine glycan is linked to Asn31. FAD contacts are provided by Glu38 and Arg119. The active site involves Arg201. FAD contacts are provided by Asp323 and Ala336. An N-linked (GlcNAc...) asparagine glycan is attached at Asn358.

This sequence belongs to the paxM FAD-dependent monooxygenase family. FAD serves as cofactor.

Its subcellular location is the membrane. The protein operates within secondary metabolite biosynthesis. In terms of biological role, FAD-dependent monooxygenase; part of the gene cluster that mediates the biosynthesis of sorbicillinoids, a diverse group of yellow secondary metabolites that restrict growth of competing pathogenic fungi but not of bacteria. Sorbicillinoids biosynthesis requires the action of two PKSs. SorA iteratively combines three acetyl units and the growing chain is modified by the ketoacyl reductase subunit, and optional by the enoyl reductase subunit in the second cycle. The polyketide is then handed over to the PKS SorB, which adds three more acetyl units, and two methyl groups. SorB releases an aldehyde, which undergoes spontaneous cyclization resulting in the formation of sorbicillin or 2',3'-dihydrosorbicillin. The monooxygenase sorC oxidizes sorbicillin and 2',3'-dihydrosorbicillin to 2',3'-dihydrosorbicillinol and sorbicillinol, respectively. The oxidoreductase sorD further converts sorbicillinol into oxosorbicillinol. Sorbicillinol is the building block for the other sorbicillinoids such as disorbicillinol, bisvertinolon, and dihydrobisvertinolone. This chain is FAD-dependent monooxygenase sorC, found in Penicillium rubens (strain ATCC 28089 / DSM 1075 / NRRL 1951 / Wisconsin 54-1255) (Penicillium chrysogenum).